Here is a 164-residue protein sequence, read N- to C-terminus: UPF0304 protein YfbU (164 aa).

This sequence belongs to the UPF0304 family.

In Salmonella enteritidis PT4 (strain P125109), this protein is UPF0304 protein YfbU.